The primary structure comprises 380 residues: Cytochrome b (380 aa).

The next 4 membrane-spanning stretches (helical) occupy residues 33-53 (FGSLLGICLMVQIITGLFLAM), 77-98 (WLIRYMHANGASMFFICLFIHV), 113-133 (WNIGIALFLTTMATAFVGYVL), and 178-198 (FFAFHFILPFIITAFVLVHLL). His83 and His97 together coordinate heme b. 2 residues coordinate heme b: His182 and His196. His201 serves as a coordination point for a ubiquinone. 4 helical membrane passes run 226–246 (IKDILGILMLLMVLMILVLFF), 288–308 (LGGVTALILSILILAMFPLIN), 320–340 (ITQAMYWIFIANLFILTWIGG), and 347–367 (FTMIGLISSILYFSIIVMFMF).

The protein belongs to the cytochrome b family. As to quaternary structure, the cytochrome bc1 complex contains 11 subunits: 3 respiratory subunits (MT-CYB, CYC1 and UQCRFS1), 2 core proteins (UQCRC1 and UQCRC2) and 6 low-molecular weight proteins (UQCRH/QCR6, UQCRB/QCR7, UQCRQ/QCR8, UQCR10/QCR9, UQCR11/QCR10 and a cleavage product of UQCRFS1). This cytochrome bc1 complex then forms a dimer. Heme b is required as a cofactor.

The protein resides in the mitochondrion inner membrane. Functionally, component of the ubiquinol-cytochrome c reductase complex (complex III or cytochrome b-c1 complex) that is part of the mitochondrial respiratory chain. The b-c1 complex mediates electron transfer from ubiquinol to cytochrome c. Contributes to the generation of a proton gradient across the mitochondrial membrane that is then used for ATP synthesis. The polypeptide is Cytochrome b (MT-CYB) (Calomys musculinus (Drylands vesper mouse)).